The following is a 1410-amino-acid chain: DNA-directed RNA polymerase subunit beta' (1410 aa).

Positions 70, 72, 85, and 88 each coordinate Zn(2+). Aspartate 460, aspartate 462, and aspartate 464 together coordinate Mg(2+). Residues cysteine 814, cysteine 888, cysteine 895, and cysteine 898 each coordinate Zn(2+).

It belongs to the RNA polymerase beta' chain family. In terms of assembly, the RNAP catalytic core consists of 2 alpha, 1 beta, 1 beta' and 1 omega subunit. When a sigma factor is associated with the core the holoenzyme is formed, which can initiate transcription. Requires Mg(2+) as cofactor. Zn(2+) is required as a cofactor.

The catalysed reaction is RNA(n) + a ribonucleoside 5'-triphosphate = RNA(n+1) + diphosphate. DNA-dependent RNA polymerase catalyzes the transcription of DNA into RNA using the four ribonucleoside triphosphates as substrates. The polypeptide is DNA-directed RNA polymerase subunit beta' (Buchnera aphidicola subsp. Cinara cedri (strain Cc)).